Here is a 251-residue protein sequence, read N- to C-terminus: Protein TK1472 (251 aa).

Belongs to the CinA family.

The chain is Protein TK1472 from Thermococcus kodakarensis (strain ATCC BAA-918 / JCM 12380 / KOD1) (Pyrococcus kodakaraensis (strain KOD1)).